The primary structure comprises 423 residues: Putative RING-H2 finger protein ATL49 (423 aa).

The helical transmembrane segment at 43 to 63 (ILLIIIILSIIFFISGLLHIL) threads the bilayer. The segment at 126-168 (CPVCLCEFETEDKLRLLPKCSHAFHVECIDTWLLSHSTCPLCR) adopts an RING-type; atypical zinc-finger fold. Disordered stretches follow at residues 213–236 (NNDS…DMDG) and 377–399 (HRIP…KTPS). Residues 379 to 389 (IPPEESLKSEN) show a composition bias toward basic and acidic residues.

Belongs to the RING-type zinc finger family. ATL subfamily.

The protein resides in the membrane. It carries out the reaction S-ubiquitinyl-[E2 ubiquitin-conjugating enzyme]-L-cysteine + [acceptor protein]-L-lysine = [E2 ubiquitin-conjugating enzyme]-L-cysteine + N(6)-ubiquitinyl-[acceptor protein]-L-lysine.. It functions in the pathway protein modification; protein ubiquitination. Functionally, may be involved in female gametophyte development. This chain is Putative RING-H2 finger protein ATL49 (ATL49), found in Arabidopsis thaliana (Mouse-ear cress).